The following is a 656-amino-acid chain: uncharacterized protein (656 aa).

The disordered stretch occupies residues 623–656 (EIDIPGTPASIDPEWSRPPGSITDDHVFDAPLHR). Residues 645–656 (TDDHVFDAPLHR) are compositionally biased toward basic and acidic residues.

This is an uncharacterized protein from Mycobacterium tuberculosis (strain CDC 1551 / Oshkosh).